Consider the following 449-residue polypeptide: UDP-N-acetylmuramoylalanine--D-glutamate ligase (449 aa).

118–124 is a binding site for ATP; the sequence is GSNGKTT.

The protein belongs to the MurCDEF family.

It localises to the cytoplasm. The catalysed reaction is UDP-N-acetyl-alpha-D-muramoyl-L-alanine + D-glutamate + ATP = UDP-N-acetyl-alpha-D-muramoyl-L-alanyl-D-glutamate + ADP + phosphate + H(+). Its pathway is cell wall biogenesis; peptidoglycan biosynthesis. Functionally, cell wall formation. Catalyzes the addition of glutamate to the nucleotide precursor UDP-N-acetylmuramoyl-L-alanine (UMA). The polypeptide is UDP-N-acetylmuramoylalanine--D-glutamate ligase (Leuconostoc citreum (strain KM20)).